A 310-amino-acid chain; its full sequence is MVKVYAPASIGNVSVGFDVLGAAVSPVDGTLLGDCVSVSRADSFSLQSAGRFVDKLPAEPEQNIVYQCWQRFCEAVGETVPVAMLLEKNMPIGSGLGSSACSVVVALVAMNAHCGRPLNDDQMLMLMGEMEGRISGGVHFDNVAPCFLGGMQLMLEENGIISQTVPGFDDWLWVMAYPGIKVSTAEARAILPAQYRRQDCISHGRYLACFVHACHTRQPALAAKLMKDVIAEPYRTRLLPGFADARQAVGDIGALACGISGSGPTLFAICDRQDTASRVADWLTQHYLQNDEGFVHICRLDTSGARLMMD.

Residue 91–101 (PIGSGLGSSAC) coordinates ATP.

It belongs to the GHMP kinase family. Homoserine kinase subfamily.

The protein localises to the cytoplasm. It carries out the reaction L-homoserine + ATP = O-phospho-L-homoserine + ADP + H(+). It participates in amino-acid biosynthesis; L-threonine biosynthesis; L-threonine from L-aspartate: step 4/5. In terms of biological role, catalyzes the ATP-dependent phosphorylation of L-homoserine to L-homoserine phosphate. This Sodalis glossinidius (strain morsitans) protein is Homoserine kinase.